A 235-amino-acid polypeptide reads, in one-letter code: Probable inactive serine protease 37 (235 aa).

Positions 1 to 19 (MKFTFCLTVLAGTFFSAHS) are cleaved as a signal peptide. The Peptidase S1 domain occupies 20 to 233 (SVQKDDPSPY…YVSWIESTTK (214 aa)). Cystine bridges form between cysteine 40-cysteine 56, cysteine 131-cysteine 198, and cysteine 163-cysteine 177.

It belongs to the peptidase S1 family.

The protein localises to the cytoplasmic vesicle. The protein resides in the secretory vesicle. It localises to the acrosome. Its subcellular location is the secreted. Plays a role in male fertility. May have a role in sperm migration or binding to zona-intact eggs. Involved in the activation of the proacrosin/acrosin system. The protein is Probable inactive serine protease 37 of Bos taurus (Bovine).